A 708-amino-acid polypeptide reads, in one-letter code: Metal-pseudopaline receptor CntO (708 aa).

Positions 1 to 21 are cleaved as a signal peptide; sequence MRVSVSLVLGVGLGCSSPALW. In terms of domain architecture, TBDR plug spans 63–169; that stretch reads RIEDIPQAIS…PGGTVNLVTK (107 aa). The TBDR beta-barrel domain maps to 174 to 708; the sequence is ERFARLHASA…NLTMSLTLNY (535 aa).

Belongs to the TonB-dependent receptor family.

It is found in the cell outer membrane. Functionally, transports the metallophore pseudopaline, which is involved in the acquisition of nickel and zinc, and thus enables bacterial growth inside the host, where metal access is limited. Is probably involved in the import of pseudopaline-metal complexes. The polypeptide is Metal-pseudopaline receptor CntO (Pseudomonas aeruginosa (strain UCBPP-PA14)).